We begin with the raw amino-acid sequence, 287 residues long: ADP-dependent (S)-NAD(P)H-hydrate dehydratase (287 aa).

The YjeF C-terminal domain maps to 7–283; it reads GEDDVRKFVP…ELLPSVMKPF (277 aa). (6S)-NADPHX is bound by residues Ala42 and His159. AMP-binding positions include 196 to 200 and Gly224; that span reads KGPTD. Residue Asp225 coordinates (6S)-NADPHX.

It belongs to the NnrD/CARKD family. As to quaternary structure, homotetramer. The cofactor is Mg(2+).

It carries out the reaction (6S)-NADHX + ADP = AMP + phosphate + NADH + H(+). The catalysed reaction is (6S)-NADPHX + ADP = AMP + phosphate + NADPH + H(+). Its function is as follows. Catalyzes the dehydration of the S-form of NAD(P)HX at the expense of ADP, which is converted to AMP. Together with NAD(P)HX epimerase, which catalyzes the epimerization of the S- and R-forms, the enzyme allows the repair of both epimers of NAD(P)HX, a damaged form of NAD(P)H that is a result of enzymatic or heat-dependent hydration. In Cenarchaeum symbiosum (strain A), this protein is ADP-dependent (S)-NAD(P)H-hydrate dehydratase.